Here is a 123-residue protein sequence, read N- to C-terminus: Small ribosomal subunit protein uS12 (123 aa).

Position 89 is a 3-methylthioaspartic acid (Asp-89).

This sequence belongs to the universal ribosomal protein uS12 family. Part of the 30S ribosomal subunit. Contacts proteins S8 and S17. May interact with IF1 in the 30S initiation complex.

Its function is as follows. With S4 and S5 plays an important role in translational accuracy. In terms of biological role, interacts with and stabilizes bases of the 16S rRNA that are involved in tRNA selection in the A site and with the mRNA backbone. Located at the interface of the 30S and 50S subunits, it traverses the body of the 30S subunit contacting proteins on the other side and probably holding the rRNA structure together. The combined cluster of proteins S8, S12 and S17 appears to hold together the shoulder and platform of the 30S subunit. The chain is Small ribosomal subunit protein uS12 from Myxococcus xanthus.